Consider the following 761-residue polypeptide: Xaa-Pro dipeptidyl-peptidase (761 aa).

Residues S347, D467, and H497 each act as charge relay system in the active site.

It belongs to the peptidase S15 family. In terms of assembly, homodimer.

The protein resides in the cytoplasm. The catalysed reaction is Hydrolyzes Xaa-Pro-|- bonds to release unblocked, N-terminal dipeptides from substrates including Ala-Pro-|-p-nitroanilide and (sequentially) Tyr-Pro-|-Phe-Pro-|-Gly-Pro-|-Ile.. Functionally, removes N-terminal dipeptides sequentially from polypeptides having unsubstituted N-termini provided that the penultimate residue is proline. The sequence is that of Xaa-Pro dipeptidyl-peptidase from Streptococcus agalactiae serotype V (strain ATCC BAA-611 / 2603 V/R).